A 229-amino-acid polypeptide reads, in one-letter code: DNA mismatch repair protein MutH (229 aa).

Belongs to the MutH family.

The protein resides in the cytoplasm. Sequence-specific endonuclease that cleaves unmethylated GATC sequences. It is involved in DNA mismatch repair. This is DNA mismatch repair protein MutH from Shigella dysenteriae serotype 1 (strain Sd197).